The chain runs to 681 residues: PTS system glucose-specific EIICBA component (681 aa).

One can recognise a PTS EIIC type-1 domain in the interval lysine 3 to aspartate 414. Transmembrane regions (helical) follow at residues leucine 16–isoleucine 36, methionine 73–alanine 93, isoleucine 126–alanine 146, phenylalanine 170–tryptophan 190, alanine 199–isoleucine 219, phenylalanine 273–tyrosine 293, valine 303–proline 323, phenylalanine 328–leucine 348, valine 355–proline 375, and valine 383–valine 403. The PTS EIIB type-1 domain maps to threonine 425–glutamate 506. Cysteine 447 serves as the catalytic Phosphocysteine intermediate; for EIIB activity. The PTS EIIA type-1 domain maps to aspartate 551 to glutamine 655. Catalysis depends on histidine 603, which acts as the Tele-phosphohistidine intermediate; for EIIA activity.

It localises to the cell membrane. It catalyses the reaction N(pros)-phospho-L-histidyl-[protein] + D-glucose(out) = D-glucose 6-phosphate(in) + L-histidyl-[protein]. Its function is as follows. The phosphoenolpyruvate-dependent sugar phosphotransferase system (sugar PTS), a major carbohydrate active transport system, catalyzes the phosphorylation of incoming sugar substrates concomitantly with their translocation across the cell membrane. This system is involved in glucose transport. The polypeptide is PTS system glucose-specific EIICBA component (ptsG) (Staphylococcus aureus (strain JH9)).